Here is a 145-residue protein sequence, read N- to C-terminus: UPF0735 ACT domain-containing protein CPE1414 (145 aa).

The region spanning isoleucine 69 to methionine 144 is the ACT domain.

The protein belongs to the UPF0735 family.

This chain is UPF0735 ACT domain-containing protein CPE1414, found in Clostridium perfringens (strain 13 / Type A).